The chain runs to 63 residues: Small ribosomal subunit protein bS21 (63 aa).

Over residues 40–52 (KPSVKRKLKSEAA) the composition is skewed to basic and acidic residues. Positions 40–63 (KPSVKRKLKSEAARKRKNKRGRRY) are disordered. Positions 53–63 (RKRKNKRGRRY) are enriched in basic residues.

Belongs to the bacterial ribosomal protein bS21 family.

This is Small ribosomal subunit protein bS21 from Limosilactobacillus reuteri (strain DSM 20016) (Lactobacillus reuteri).